The sequence spans 349 residues: N-acetyltaurine hydrolase (349 aa).

Positions 26, 28, 169, 201, 230, and 298 each coordinate a divalent metal cation.

The protein belongs to the metallo-dependent hydrolases superfamily. Phosphotriesterase family. It depends on a divalent metal cation as a cofactor.

Its subcellular location is the cytoplasm. It is found in the cytosol. The catalysed reaction is N-acetyltaurine + H2O = taurine + acetate. It catalyses the reaction N-propanoyltaurine + H2O = propanoate + taurine. It carries out the reaction N-acetyl-L-methionine + H2O = L-methionine + acetate. The enzyme catalyses N-acetyl-L-isoleucine + H2O = L-isoleucine + acetate. The catalysed reaction is N-acetyl-L-leucine + H2O = L-leucine + acetate. It catalyses the reaction N-acetyl-L-valine + H2O = L-valine + acetate. Its function is as follows. N-acetyltaurine hydrolase that regulates feeding by catalyzing the hydrolysis of N-acetyltaurine into taurine and acetate. N-acetyltaurine has anorexigenic and anti-obesity effects that are dependent on GFRAL receptor and GDF15. PTER also acts on other N-acetyl amino acids (Met, Ile, Leu, Val) and N-propionyltaurine, but at lower rates. This Homo sapiens (Human) protein is N-acetyltaurine hydrolase.